Reading from the N-terminus, the 202-residue chain is MSRYRGPRLRITRRLGDLPGLTRKAAKRSHPPGQHGQARRKRSEYAIRLEEKQKLRFNYGISERQLVRYVKKARAQDGSTGTNLLKLLENRLDNVCFRLGFGPTVPGARQLVNHGHVTVNGRVLDIASYQCKAGDVVAIRERKGSKKLAEANLEFPGLANVPPHIELDKAKMSAKIISKCEREWVALEINELLVVEYYSRKV.

Positions 1 to 13 (MSRYRGPRLRITR) are enriched in basic residues. The interval 1-43 (MSRYRGPRLRITRRLGDLPGLTRKAAKRSHPPGQHGQARRKRS) is disordered. The S4 RNA-binding domain occupies 90–152 (NRLDNVCFRL…KGSKKLAEAN (63 aa)).

The protein belongs to the universal ribosomal protein uS4 family. In terms of assembly, part of the 30S ribosomal subunit. Contacts protein S5. The interaction surface between S4 and S5 is involved in control of translational fidelity.

Functionally, one of the primary rRNA binding proteins, it binds directly to 16S rRNA where it nucleates assembly of the body of the 30S subunit. In terms of biological role, with S5 and S12 plays an important role in translational accuracy. The chain is Small ribosomal subunit protein uS4 from Prochlorococcus marinus (strain MIT 9303).